We begin with the raw amino-acid sequence, 112 residues long: Putative pterin-4-alpha-carbinolamine dehydratase (112 aa).

The protein belongs to the pterin-4-alpha-carbinolamine dehydratase family.

The enzyme catalyses (4aS,6R)-4a-hydroxy-L-erythro-5,6,7,8-tetrahydrobiopterin = (6R)-L-erythro-6,7-dihydrobiopterin + H2O. In Syntrophotalea carbinolica (strain DSM 2380 / NBRC 103641 / GraBd1) (Pelobacter carbinolicus), this protein is Putative pterin-4-alpha-carbinolamine dehydratase.